A 212-amino-acid polypeptide reads, in one-letter code: Peptide methionine sulfoxide reductase MsrA (212 aa).

Cys52 is a catalytic residue.

The protein belongs to the MsrA Met sulfoxide reductase family.

It catalyses the reaction L-methionyl-[protein] + [thioredoxin]-disulfide + H2O = L-methionyl-(S)-S-oxide-[protein] + [thioredoxin]-dithiol. It carries out the reaction [thioredoxin]-disulfide + L-methionine + H2O = L-methionine (S)-S-oxide + [thioredoxin]-dithiol. Its function is as follows. Has an important function as a repair enzyme for proteins that have been inactivated by oxidation. Catalyzes the reversible oxidation-reduction of methionine sulfoxide in proteins to methionine. This chain is Peptide methionine sulfoxide reductase MsrA, found in Escherichia fergusonii (strain ATCC 35469 / DSM 13698 / CCUG 18766 / IAM 14443 / JCM 21226 / LMG 7866 / NBRC 102419 / NCTC 12128 / CDC 0568-73).